A 424-amino-acid chain; its full sequence is ATP synthase subunit beta, mitochondrial (424 aa).

The N-terminal 60 residues, 1–60, are a transit peptide targeting the mitochondrion; it reads MFRLSSGLLKGGACASRSRIPQLGRSLYSTATSAGADKTQGKIHTVIGAVVDVQFNHGRL. Residues 187-194, 188-195, 219-220, and Tyr-374 each bind ATP; these read GGAGVGKT, GAGVGKTV, and ER.

Belongs to the ATPase alpha/beta chains family. F-type ATPases have 2 components, CF(1) - the catalytic core - and CF(0) - the membrane proton channel. CF(1) has five subunits: alpha(3), beta(3), gamma(1), delta(1), epsilon(1). CF(0) has three main subunits: a, b and c.

Its subcellular location is the mitochondrion. The protein resides in the mitochondrion inner membrane. It carries out the reaction ATP + H2O + 4 H(+)(in) = ADP + phosphate + 5 H(+)(out). ATP synthase subunit beta; part of the gene cluster that mediates the biosynthesis of citreoviridin, an inhibitor of the of F1-ATPase beta-subunit. Mitochondrial membrane ATP synthase (F(1)F(0) ATP synthase or Complex V) produces ATP from ADP in the presence of a proton gradient across the membrane which is generated by electron transport complexes of the respiratory chain. Whereas ctvA to ctvD constitute the core biosynthetic gene cluster, ctvE acts as a self-resistance gene. The sequence is that of ATP synthase subunit beta, mitochondrial from Aspergillus terreus (strain NIH 2624 / FGSC A1156).